The primary structure comprises 328 residues: D-cysteine desulfhydrase (328 aa).

At Lys-51 the chain carries N6-(pyridoxal phosphate)lysine.

This sequence belongs to the ACC deaminase/D-cysteine desulfhydrase family. As to quaternary structure, homodimer. Requires pyridoxal 5'-phosphate as cofactor.

The enzyme catalyses D-cysteine + H2O = hydrogen sulfide + pyruvate + NH4(+) + H(+). Functionally, catalyzes the alpha,beta-elimination reaction of D-cysteine and of several D-cysteine derivatives. It could be a defense mechanism against D-cysteine. In Klebsiella pneumoniae subsp. pneumoniae (strain ATCC 700721 / MGH 78578), this protein is D-cysteine desulfhydrase.